A 108-amino-acid chain; its full sequence is UPF0060 membrane protein SH0717 (108 aa).

Helical transmembrane passes span 5 to 25 (IFIF…IWLW), 31 to 51 (SSWL…IATF), 60 to 80 (VYAA…YIVD), and 86 to 106 (KYDL…ILPS).

This sequence belongs to the UPF0060 family.

The protein resides in the cell membrane. In Staphylococcus haemolyticus (strain JCSC1435), this protein is UPF0060 membrane protein SH0717.